A 154-amino-acid polypeptide reads, in one-letter code: 17 kDa surface antigen (154 aa).

The signal sequence occupies residues 1–19; it reads MKLLSKIMVIALATSMLQA. Residue cysteine 20 is the site of N-palmitoyl cysteine attachment. Cysteine 20 carries the S-diacylglycerol cysteine lipid modification.

It belongs to the rickettsiale 17 kDa surface antigen family.

It localises to the cell outer membrane. In Rickettsia parkeri, this protein is 17 kDa surface antigen (omp).